Consider the following 185-residue polypeptide: Elongation factor P (185 aa).

The protein belongs to the elongation factor P family.

Its subcellular location is the cytoplasm. The protein operates within protein biosynthesis; polypeptide chain elongation. Involved in peptide bond synthesis. Stimulates efficient translation and peptide-bond synthesis on native or reconstituted 70S ribosomes in vitro. Probably functions indirectly by altering the affinity of the ribosome for aminoacyl-tRNA, thus increasing their reactivity as acceptors for peptidyl transferase. The protein is Elongation factor P of Clostridium botulinum (strain ATCC 19397 / Type A).